The sequence spans 186 residues: Lipid A acyltransferase PagP (186 aa).

A signal peptide spans methionine 1–alanine 25. Residues histidine 58, aspartate 101, and serine 102 contribute to the active site.

Belongs to the lipid A palmitoyltransferase family. As to quaternary structure, homodimer.

Its subcellular location is the cell outer membrane. It carries out the reaction a lipid A + a 1,2-diacyl-sn-glycero-3-phosphocholine = a hepta-acyl lipid A + a 2-acyl-sn-glycero-3-phosphocholine. The enzyme catalyses a lipid IVA + a 1,2-diacyl-sn-glycero-3-phosphocholine = a lipid IVB + a 2-acyl-sn-glycero-3-phosphocholine. It catalyses the reaction a lipid IIA + a 1,2-diacyl-sn-glycero-3-phosphocholine = a lipid IIB + a 2-acyl-sn-glycero-3-phosphocholine. Functionally, transfers a fatty acid residue from the sn-1 position of a phospholipid to the N-linked hydroxyfatty acid chain on the proximal unit of lipid A or its precursors. The protein is Lipid A acyltransferase PagP of Shigella flexneri serotype X (strain 2002017).